A 122-amino-acid polypeptide reads, in one-letter code: Large ribosomal subunit protein uL14 (122 aa).

Belongs to the universal ribosomal protein uL14 family. As to quaternary structure, part of the 50S ribosomal subunit. Forms a cluster with proteins L3 and L19. In the 70S ribosome, L14 and L19 interact and together make contacts with the 16S rRNA in bridges B5 and B8.

Its function is as follows. Binds to 23S rRNA. Forms part of two intersubunit bridges in the 70S ribosome. The sequence is that of Large ribosomal subunit protein uL14 from Sulfurovum sp. (strain NBC37-1).